The chain runs to 350 residues: Flap endonuclease 1 (350 aa).

Residues 1–102 (MGVTELGKLI…IEIEKRRRVR (102 aa)) form an N-domain region. Residues aspartate 31, aspartate 84, glutamate 156, glutamate 158, aspartate 177, aspartate 179, and aspartate 241 each contribute to the Mg(2+) site. Residues 120–263 (EARKYAQRAL…RALRLIQEYG (144 aa)) are I-domain.

Belongs to the XPG/RAD2 endonuclease family. FEN1 subfamily. Interacts with PCNA. PCNA stimulates the nuclease activity without altering cleavage specificity. Mg(2+) serves as cofactor.

Its function is as follows. Structure-specific nuclease with 5'-flap endonuclease and 5'-3' exonuclease activities involved in DNA replication and repair. During DNA replication, cleaves the 5'-overhanging flap structure that is generated by displacement synthesis when DNA polymerase encounters the 5'-end of a downstream Okazaki fragment. Binds the unpaired 3'-DNA end and kinks the DNA to facilitate 5' cleavage specificity. Cleaves one nucleotide into the double-stranded DNA from the junction in flap DNA, leaving a nick for ligation. Also involved in the base excision repair (BER) pathway. Acts as a genome stabilization factor that prevents flaps from equilibrating into structures that lead to duplications and deletions. Also possesses 5'-3' exonuclease activity on nicked or gapped double-stranded DNA. The sequence is that of Flap endonuclease 1 from Caldivirga maquilingensis (strain ATCC 700844 / DSM 13496 / JCM 10307 / IC-167).